Consider the following 396-residue polypeptide: MSKLDAYFGEFGGQYVPQILVPALDQLEDAFIEAQQDPAFQKEFIDLLKDYAGRPTALTLCQNLTKGTKTKLYLKREDLLHGGAHKTNQVLGQALLAKRMGKKEIIAETGAGQHGVATALACALLGLKCRVYMGAKDIERQSPNVFRMKLMGATVIPVHSGSSTLKDACNEAMRDWSATYEEAHYLLGTAAGPHPFPTIVREFQRIIGEETKVQILEKEGRLPDAVIACVGGGSNAIGMFADFIDEKDVSLIGVEPAGKGLDTKMHGAPLKHGKLGIFFGMKAPLMQDEHGQVEESYSVSAGLDFPSVGPQHAHLNAIGRAEYGSVTDDEALDAFQLLARKEGIIPALESAHALAYALKMIEAEPEKEQLLVVNLSGRGDKDIFTVHDILDAKGVL.

Lys86 carries the post-translational modification N6-(pyridoxal phosphate)lysine.

Belongs to the TrpB family. As to quaternary structure, tetramer of two alpha and two beta chains. The cofactor is pyridoxal 5'-phosphate.

It catalyses the reaction (1S,2R)-1-C-(indol-3-yl)glycerol 3-phosphate + L-serine = D-glyceraldehyde 3-phosphate + L-tryptophan + H2O. Its pathway is amino-acid biosynthesis; L-tryptophan biosynthesis; L-tryptophan from chorismate: step 5/5. Functionally, the beta subunit is responsible for the synthesis of L-tryptophan from indole and L-serine. This is Tryptophan synthase beta chain from Photobacterium profundum (strain SS9).